The following is a 437-amino-acid chain: Phosphoglucosamine mutase (437 aa).

The active-site Phosphoserine intermediate is the Ser101. Residues Ser101, Asp234, Asp236, and Asp238 each coordinate Mg(2+). Position 101 is a phosphoserine (Ser101).

This sequence belongs to the phosphohexose mutase family. Requires Mg(2+) as cofactor. Activated by phosphorylation.

It catalyses the reaction alpha-D-glucosamine 1-phosphate = D-glucosamine 6-phosphate. Catalyzes the conversion of glucosamine-6-phosphate to glucosamine-1-phosphate. This chain is Phosphoglucosamine mutase, found in Thermus thermophilus (strain ATCC BAA-163 / DSM 7039 / HB27).